The chain runs to 200 residues: Small ribosomal subunit protein uS4 (200 aa).

A disordered region spans residues 22–42; it reads TGKELEKRPYAPGPHGPNQRK. The S4 RNA-binding domain occupies 92–152; that stretch reads ARLDNLVYRM…EKSRNLAVIK (61 aa).

Belongs to the universal ribosomal protein uS4 family. In terms of assembly, part of the 30S ribosomal subunit. Contacts protein S5. The interaction surface between S4 and S5 is involved in control of translational fidelity.

Functionally, one of the primary rRNA binding proteins, it binds directly to 16S rRNA where it nucleates assembly of the body of the 30S subunit. With S5 and S12 plays an important role in translational accuracy. This chain is Small ribosomal subunit protein uS4, found in Bacillus cytotoxicus (strain DSM 22905 / CIP 110041 / 391-98 / NVH 391-98).